A 312-amino-acid polypeptide reads, in one-letter code: Very-long-chain 3-oxoacyl-CoA reductase (312 aa).

A run of 3 helical transmembrane segments spans residues 33–53 (VWGIGAGRAALGPGLGAWAVV), 181–201 (GVILNISSAAGMYPTPLLTLY), and 274–294 (HAFMGWVFSILPTSTVMNLLM). 48–77 (GAWAVVTGATDGIGKAYAKELAKRGMKVAL) lines the NADP(+) pocket. S188 lines the substrate pocket. Y201 acts as the Proton acceptor in catalysis.

This sequence belongs to the short-chain dehydrogenases/reductases (SDR) family. 17-beta-HSD 3 subfamily. As to expression, brain.

It localises to the endoplasmic reticulum membrane. It carries out the reaction a very-long-chain (3R)-3-hydroxyacyl-CoA + NADP(+) = a very-long-chain 3-oxoacyl-CoA + NADPH + H(+). It catalyses the reaction 17beta-estradiol + NAD(+) = estrone + NADH + H(+). The enzyme catalyses 17beta-estradiol + NADP(+) = estrone + NADPH + H(+). The catalysed reaction is 3-oxooctadecanoyl-CoA + NADPH + H(+) = (3R)-hydroxyoctadecanoyl-CoA + NADP(+). It carries out the reaction (7Z,10Z,13Z,16Z)-3-oxodocosatetraenoyl-CoA + NADPH + H(+) = (3R)-hydroxy-(7Z,10Z,13Z,16Z)-docosatetraenoyl-CoA + NADP(+). It catalyses the reaction 3-oxo-(7Z,10Z,13Z,16Z,19Z)-docosapentaenoyl-CoA + NADPH + H(+) = (3R)-hydroxy-(7Z,10Z,13Z,16Z,19Z)-docosapentaenoyl-CoA + NADP(+). The enzyme catalyses (8Z,11Z,14Z)-3-oxoeicosatrienoyl-CoA + NADPH + H(+) = (3R)-hydroxy-(8Z,11Z,14Z)-eicosatrienoyl-CoA + NADP(+). It participates in lipid metabolism; fatty acid biosynthesis. The protein operates within steroid biosynthesis; estrogen biosynthesis. Catalyzes the second of the four reactions of the long-chain fatty acids elongation cycle. This endoplasmic reticulum-bound enzymatic process, allows the addition of two carbons to the chain of long- and very long-chain fatty acids/VLCFAs per cycle. This enzyme has a 3-ketoacyl-CoA reductase activity, reducing 3-ketoacyl-CoA to 3-hydroxyacyl-CoA, within each cycle of fatty acid elongation. Thereby, it may participate in the production of VLCFAs of different chain lengths that are involved in multiple biological processes as precursors of membrane lipids and lipid mediators. May also catalyze the transformation of estrone (E1) into estradiol (E2) and play a role in estrogen formation. This chain is Very-long-chain 3-oxoacyl-CoA reductase (HSD17B12), found in Anas platyrhynchos (Mallard).